We begin with the raw amino-acid sequence, 92 residues long: Co-chaperonin GroES (92 aa).

The protein belongs to the GroES chaperonin family. Heptamer of 7 subunits arranged in a ring. Interacts with the chaperonin GroEL.

The protein resides in the cytoplasm. Its function is as follows. Together with the chaperonin GroEL, plays an essential role in assisting protein folding. The GroEL-GroES system forms a nano-cage that allows encapsulation of the non-native substrate proteins and provides a physical environment optimized to promote and accelerate protein folding. GroES binds to the apical surface of the GroEL ring, thereby capping the opening of the GroEL channel. The protein is Co-chaperonin GroES of Thermotoga petrophila (strain ATCC BAA-488 / DSM 13995 / JCM 10881 / RKU-1).